We begin with the raw amino-acid sequence, 256 residues long: Small ribosomal subunit protein eS1 (256 aa).

N-acetylalanine; partial is present on A2.

This sequence belongs to the eukaryotic ribosomal protein eS1 family. In terms of assembly, component of the small ribosomal subunit. Mature ribosomes consist of a small (40S) and a large (60S) subunit. The 40S subunit contains about 33 different proteins and 1 molecule of RNA (18S). The 60S subunit contains about 49 different proteins and 3 molecules of RNA (25S, 5.8S and 5S).

The protein resides in the cytoplasm. The protein is Small ribosomal subunit protein eS1 of Candida albicans (strain SC5314 / ATCC MYA-2876) (Yeast).